A 204-amino-acid chain; its full sequence is Large ribosomal subunit protein bL9 (204 aa).

Residues 180 to 204 (DDIGGAASDDEGDAPAAAADEEESK) form a disordered region. The span at 187–204 (SDDEGDAPAAAADEEESK) shows a compositional bias: acidic residues.

The protein belongs to the bacterial ribosomal protein bL9 family.

Its function is as follows. Binds to the 23S rRNA. The protein is Large ribosomal subunit protein bL9 of Ruegeria sp. (strain TM1040) (Silicibacter sp.).